Here is a 124-residue protein sequence, read N- to C-terminus: Fluoride-specific ion channel FluC (124 aa).

Transmembrane regions (helical) follow at residues 4–24, 35–55, 60–80, and 102–122; these read LLLV…ISIF, FGTL…YALG, ISPE…TTFS, and VVLN…LVFS. Na(+) is bound by residues glycine 74 and threonine 77.

It belongs to the fluoride channel Fluc/FEX (TC 1.A.43) family.

The protein resides in the cell inner membrane. It catalyses the reaction fluoride(in) = fluoride(out). Na(+) is not transported, but it plays an essential structural role and its presence is essential for fluoride channel function. Its function is as follows. Fluoride-specific ion channel. Important for reducing fluoride concentration in the cell, thus reducing its toxicity. In Shewanella sp. (strain ANA-3), this protein is Fluoride-specific ion channel FluC.